The sequence spans 261 residues: Cyclin-J18-like (261 aa).

This sequence belongs to the cyclin family.

This is Cyclin-J18-like from Oryza sativa subsp. japonica (Rice).